The chain runs to 238 residues: tRNA (guanine-N(1)-)-methyltransferase (238 aa).

Residues G109 and I129 to L134 each bind S-adenosyl-L-methionine.

Belongs to the RNA methyltransferase TrmD family. In terms of assembly, homodimer.

It is found in the cytoplasm. The catalysed reaction is guanosine(37) in tRNA + S-adenosyl-L-methionine = N(1)-methylguanosine(37) in tRNA + S-adenosyl-L-homocysteine + H(+). Functionally, specifically methylates guanosine-37 in various tRNAs. This Exiguobacterium sp. (strain ATCC BAA-1283 / AT1b) protein is tRNA (guanine-N(1)-)-methyltransferase.